The following is a 1024-amino-acid chain: Multidrug resistance protein MdtC (1024 aa).

12 helical membrane passes run 12 to 32 (VATT…FSLL), 333 to 353 (EVER…FIFL), 360 to 380 (LIPA…MYLC), 387 to 407 (LSLM…IVVL), 435 to 455 (VLSM…MAGL), 469 to 489 (VAIG…CAWL), 528 to 548 (WVMV…ISIP), 853 to 873 (LWLI…LYES), 875 to 895 (VHPL…LLAL), 897 to 917 (LFDA…IGIV), 953 to 973 (PIIM…LSSG), and 984 to 1004 (ITIV…TPVI).

It belongs to the resistance-nodulation-cell division (RND) (TC 2.A.6) family. MdtC subfamily. In terms of assembly, part of a tripartite efflux system composed of MdtA, MdtB and MdtC. MdtC forms a heteromultimer with MdtB.

It is found in the cell inner membrane. This Yersinia pestis bv. Antiqua (strain Antiqua) protein is Multidrug resistance protein MdtC.